We begin with the raw amino-acid sequence, 395 residues long: Elongation factor Tu (395 aa).

The region spanning 10-204 (KPHVNIGTIG…NVDEYIPLPQ (195 aa)) is the tr-type G domain. A G1 region spans residues 19-26 (GHVDHGKT). GTP is bound at residue 19-26 (GHVDHGKT). Thr26 serves as a coordination point for Mg(2+). The interval 60-64 (GITIN) is G2. The segment at 81–84 (DCPG) is G3. GTP contacts are provided by residues 81-85 (DCPGH) and 136-139 (NKVD). Residues 136-139 (NKVD) are G4. The G5 stretch occupies residues 174–176 (SAL).

The protein belongs to the TRAFAC class translation factor GTPase superfamily. Classic translation factor GTPase family. EF-Tu/EF-1A subfamily. In terms of assembly, monomer.

Its subcellular location is the cytoplasm. The catalysed reaction is GTP + H2O = GDP + phosphate + H(+). Its function is as follows. GTP hydrolase that promotes the GTP-dependent binding of aminoacyl-tRNA to the A-site of ribosomes during protein biosynthesis. In Amoebophilus asiaticus (strain 5a2), this protein is Elongation factor Tu.